Reading from the N-terminus, the 388-residue chain is Staphopain A (388 aa).

The signal sequence occupies residues 1–25; it reads MKRNFPKLIALSLIFSLSITPIANA. Residues 26 to 214 constitute a propeptide that is removed on maturation; sequence ESNSNIKAKD…TSQFKSNNYT (189 aa). Residues cysteine 238, histidine 334, and asparagine 355 contribute to the active site.

It belongs to the peptidase C47 family. In terms of assembly, in the cytoplasm, prematurely activated/folded ScpA forms a stable non-covalent complex with ScpB. Cleavage leads to the activation of ScpA probably by an auto-catalytic manner.

It localises to the secreted. The enzyme catalyses Broad endopeptidase action on proteins including elastin, but rather limited hydrolysis of small-molecule substrates. Assays are conveniently made with hemoglobin, casein or Z-Phe-Arg-NHMec as substrate.. With respect to regulation, prematurely activated/folded staphopain A is inhibited by staphostatin A (ScpB), which is probably required to protect staphylococcal cytoplasmic proteins from degradation by ScpA. Also inactivated by heavy metal ions such as Hg(2+) or Ag(+), iodoacetamide, E-64 and human plasma. In terms of biological role, cysteine protease that plays an important role in the inhibition of host innate immune response. Cleaves host elastins found in connective tissues, pulmonary surfactant protein A in the lungs, and the chemokine receptor CXCR2 on leukocytes. Proteolytic cleavage of surfactant protein A impairs bacterial phagocytosis by neutrophils while CXCR2 degradation blocks neutrophil activation and chemotaxis. Additionally, promotes vascular leakage by activating the plasma kallikerin/kinin system, resulting in hypotension. The protein is Staphopain A (sspP) of Staphylococcus aureus.